The sequence spans 238 residues: Cysteine-rich venom protein pseudechetoxin (238 aa).

The N-terminal stretch at 1 to 19 is a signal peptide; that stretch reads MIAFIVLLSLAAVLQQSSG. A propeptide spanning residues 20-27 is cleaved from the precursor; the sequence is TADFASES. The region spanning 38–164 is the SCP domain; sequence VDKHNALRRS…SSKYLYVCQY (127 aa). Positions 51 and 106 each coordinate Zn(2+). 8 cysteine pairs are disulfide-bonded: cysteine 75–cysteine 153, cysteine 92–cysteine 165, cysteine 148–cysteine 162, cysteine 184–cysteine 191, cysteine 187–cysteine 196, cysteine 200–cysteine 233, cysteine 209–cysteine 227, and cysteine 218–cysteine 231. Residues 200–233 form the ShKT domain; the sequence is CKRNNDFSNCKSLAKKSKCQTEWIKKKCPASCFC.

In terms of tissue distribution, expressed by the venom gland.

It is found in the secreted. In terms of biological role, blocks olfactory (CNGA2) and retinal (CNGA1) cyclic nucleotide-gated (CNG) ion channel currents. Does not inhibit retinal (CNGA3) currents. It forms high-affinity contacts with the pore turret region and most likely inhibits CNG channel current by blocking the external entrance to the transmembrane pore. Is really more potent that Pseudecin. Does not affect neither depolarization- nor caffeine-induced contraction arterial smooth muscle. This Pseudechis australis (Mulga snake) protein is Cysteine-rich venom protein pseudechetoxin.